A 262-amino-acid polypeptide reads, in one-letter code: MNKVILRILAVLFLLGIYAVSAQSDGRIVGGADTSSYYTKYVVQLRRRSSSSSSYAQTCGGCILDAVTIATAAHCVYNREAENFLVVAGDDSRGGMNGVVVRVSKLIPHELYNSSTMDNDIALVVVDPPLPLDSFSTMEAIEIASEQPAVGVQATISGWGYTKENGLSSDQLQQVKVPIVDSEKCQEAYYWRPISEGMLCAGLSEGGKDACQGDSGGPLVVANKLAGIVSWGEGCARPNYPGVYANVAYYKDWIAKQRTSYV.

An N-terminal signal peptide occupies residues 1 to 22 (MNKVILRILAVLFLLGIYAVSA). Positions 23–27 (QSDGR) are cleaved as a propeptide — activation peptide. The Peptidase S1 domain maps to 28 to 259 (IVGGADTSSY…YKDWIAKQRT (232 aa)). A disulfide bridge links C59 with C75. Active-site charge relay system residues include H74 and D120. Disulfide bonds link C185-C200 and C211-C235. S215 functions as the Charge relay system in the catalytic mechanism.

Belongs to the peptidase S1 family.

The protein resides in the secreted. Its subcellular location is the extracellular space. The enzyme catalyses Preferential cleavage: Arg-|-Xaa, Lys-|-Xaa.. This is Trypsin eta (etaTry) from Drosophila melanogaster (Fruit fly).